The following is a 587-amino-acid chain: Aspartate--tRNA ligase (587 aa).

Residue E175 participates in L-aspartate binding. The segment at 199–202 is aspartate; the sequence is QQFK. R221 and H446 together coordinate L-aspartate. 221–223 is an ATP binding site; that stretch reads RDE. E480 lines the ATP pocket. R487 lines the L-aspartate pocket. 532–535 contacts ATP; that stretch reads GVDR.

Belongs to the class-II aminoacyl-tRNA synthetase family. Type 1 subfamily. As to quaternary structure, homodimer.

Its subcellular location is the cytoplasm. The enzyme catalyses tRNA(Asp) + L-aspartate + ATP = L-aspartyl-tRNA(Asp) + AMP + diphosphate. Functionally, catalyzes the attachment of L-aspartate to tRNA(Asp) in a two-step reaction: L-aspartate is first activated by ATP to form Asp-AMP and then transferred to the acceptor end of tRNA(Asp). This chain is Aspartate--tRNA ligase, found in Streptomyces coelicolor (strain ATCC BAA-471 / A3(2) / M145).